Reading from the N-terminus, the 71-residue chain is Translation initiation factor IF-1 (71 aa).

Residues 1–71 (MSKDDLIQFT…LTKGRVIHRH (71 aa)) form the S1-like domain.

This sequence belongs to the IF-1 family. In terms of assembly, component of the 30S ribosomal translation pre-initiation complex which assembles on the 30S ribosome in the order IF-2 and IF-3, IF-1 and N-formylmethionyl-tRNA(fMet); mRNA recruitment can occur at any time during PIC assembly.

The protein resides in the cytoplasm. Functionally, one of the essential components for the initiation of protein synthesis. Stabilizes the binding of IF-2 and IF-3 on the 30S subunit to which N-formylmethionyl-tRNA(fMet) subsequently binds. Helps modulate mRNA selection, yielding the 30S pre-initiation complex (PIC). Upon addition of the 50S ribosomal subunit IF-1, IF-2 and IF-3 are released leaving the mature 70S translation initiation complex. The sequence is that of Translation initiation factor IF-1 from Rickettsia prowazekii (strain Madrid E).